Reading from the N-terminus, the 255-residue chain is Imidazole glycerol phosphate synthase subunit HisF (255 aa).

Residues Asp11 and Asp130 contribute to the active site.

Belongs to the HisA/HisF family. In terms of assembly, heterodimer of HisH and HisF.

The protein resides in the cytoplasm. The enzyme catalyses 5-[(5-phospho-1-deoxy-D-ribulos-1-ylimino)methylamino]-1-(5-phospho-beta-D-ribosyl)imidazole-4-carboxamide + L-glutamine = D-erythro-1-(imidazol-4-yl)glycerol 3-phosphate + 5-amino-1-(5-phospho-beta-D-ribosyl)imidazole-4-carboxamide + L-glutamate + H(+). It participates in amino-acid biosynthesis; L-histidine biosynthesis; L-histidine from 5-phospho-alpha-D-ribose 1-diphosphate: step 5/9. Functionally, IGPS catalyzes the conversion of PRFAR and glutamine to IGP, AICAR and glutamate. The HisF subunit catalyzes the cyclization activity that produces IGP and AICAR from PRFAR using the ammonia provided by the HisH subunit. The sequence is that of Imidazole glycerol phosphate synthase subunit HisF from Rhodopseudomonas palustris (strain BisB5).